Here is a 414-residue protein sequence, read N- to C-terminus: MKKLLAIGILCIMVTAVMSGCVSEKEININNSNKITTNMPVSEKNITKILKYAKNMNLIYYDENGNIVNPYNGDKWKYKVFIDATGQKFLLKNKDDPVPSWAKEKLGDNFKVINVPLTRVIVMSSTEIALMEAINDDGSVIGSVKGIMWGKSYKWYFKDINKSLAEGKIIDVGSSSNPNWDKIIEINPQVIFVYPGYDGDKIIAKCKELGITYVADAEYLENDPLGRCEWVKMFAAFYNKEPEAKRYFEKVEDNCLKVINKTKNCPKVTVAWGYNSQWGCYVPENNSYVAKEIMFYCNGDYIFKDLNGTGSAKINYETFAERAKDADVWVVPSSTAWLSTFKEDNPGYETFKAVKNGRVFCESDDYWQLGLLKTDEVIMDLATILHPEAFKGRKTHFFLKYNIENNTATPFIAK.

An N-terminal signal peptide occupies residues M1–G20. C21 carries S-archaeol cysteine lipidation. The region spanning R119–A389 is the Fe/B12 periplasmic-binding domain.

Its subcellular location is the cell membrane. This is an uncharacterized protein from Methanocaldococcus jannaschii (strain ATCC 43067 / DSM 2661 / JAL-1 / JCM 10045 / NBRC 100440) (Methanococcus jannaschii).